The sequence spans 858 residues: DNA mismatch repair protein MutS (858 aa).

637 to 644 (GPNMAGKS) is a binding site for ATP.

The protein belongs to the DNA mismatch repair MutS family.

This protein is involved in the repair of mismatches in DNA. It is possible that it carries out the mismatch recognition step. This protein has a weak ATPase activity. In Protochlamydia amoebophila (strain UWE25), this protein is DNA mismatch repair protein MutS.